A 65-amino-acid chain; its full sequence is Large ribosomal subunit protein bL35 (65 aa).

The disordered stretch occupies residues 1–26 (MPKIKTLRSAAKRFKKTESGKFKRKQ).

This sequence belongs to the bacterial ribosomal protein bL35 family.

The protein is Large ribosomal subunit protein bL35 of Buchnera aphidicola subsp. Baizongia pistaciae (strain Bp).